The primary structure comprises 354 residues: Uroporphyrinogen decarboxylase (354 aa).

Residues 27–31 (RQAGR), Asp-77, Tyr-154, Thr-209, and His-327 contribute to the substrate site.

This sequence belongs to the uroporphyrinogen decarboxylase family. As to quaternary structure, homodimer.

The protein localises to the cytoplasm. The enzyme catalyses uroporphyrinogen III + 4 H(+) = coproporphyrinogen III + 4 CO2. The protein operates within porphyrin-containing compound metabolism; protoporphyrin-IX biosynthesis; coproporphyrinogen-III from 5-aminolevulinate: step 4/4. Catalyzes the decarboxylation of four acetate groups of uroporphyrinogen-III to yield coproporphyrinogen-III. The polypeptide is Uroporphyrinogen decarboxylase (Serratia proteamaculans (strain 568)).